Reading from the N-terminus, the 825-residue chain is Probable phosphoketolase (825 aa).

This sequence belongs to the XFP family. The cofactor is thiamine diphosphate.

This is Probable phosphoketolase from Schizosaccharomyces pombe (strain 972 / ATCC 24843) (Fission yeast).